A 362-amino-acid polypeptide reads, in one-letter code: RING finger protein 32 (362 aa).

An RING-type 1; atypical zinc finger spans residues 127 to 169 (CPICKEEFELRPQVLLSCSHVFHRACLQAFEKFTNKKTCPLCR). Residues 186-215 (RIKCVTRIQAYWRGYVVRKWYRNLRETVPP) enclose the IQ domain. The segment at 293-352 (CSICLAPLSPAGGQRVGAGQRSRETALLSCSHVFHHACLLALEEFSVGDRPPFHACPLCR) adopts an RING-type 2; atypical zinc-finger fold.

The protein localises to the cytoplasm. May play a role in sperm formation. This is RING finger protein 32 (RNF32) from Macaca fascicularis (Crab-eating macaque).